Consider the following 234-residue polypeptide: tRNA (guanine-N(1)-)-methyltransferase (234 aa).

S-adenosyl-L-methionine contacts are provided by residues G112 and 132 to 137 (IGDFIL).

Belongs to the RNA methyltransferase TrmD family. As to quaternary structure, homodimer.

It is found in the cytoplasm. It carries out the reaction guanosine(37) in tRNA + S-adenosyl-L-methionine = N(1)-methylguanosine(37) in tRNA + S-adenosyl-L-homocysteine + H(+). Its function is as follows. Specifically methylates guanosine-37 in various tRNAs. This is tRNA (guanine-N(1)-)-methyltransferase from Campylobacter jejuni (strain RM1221).